A 556-amino-acid chain; its full sequence is 2-succinyl-5-enolpyruvyl-6-hydroxy-3-cyclohexene-1-carboxylate synthase (556 aa).

Belongs to the TPP enzyme family. MenD subfamily. In terms of assembly, homodimer. Requires Mg(2+) as cofactor. The cofactor is Mn(2+). Thiamine diphosphate serves as cofactor.

The catalysed reaction is isochorismate + 2-oxoglutarate + H(+) = 5-enolpyruvoyl-6-hydroxy-2-succinyl-cyclohex-3-ene-1-carboxylate + CO2. It participates in quinol/quinone metabolism; 1,4-dihydroxy-2-naphthoate biosynthesis; 1,4-dihydroxy-2-naphthoate from chorismate: step 2/7. It functions in the pathway quinol/quinone metabolism; menaquinone biosynthesis. In terms of biological role, catalyzes the thiamine diphosphate-dependent decarboxylation of 2-oxoglutarate and the subsequent addition of the resulting succinic semialdehyde-thiamine pyrophosphate anion to isochorismate to yield 2-succinyl-5-enolpyruvyl-6-hydroxy-3-cyclohexene-1-carboxylate (SEPHCHC). This Escherichia coli O157:H7 protein is 2-succinyl-5-enolpyruvyl-6-hydroxy-3-cyclohexene-1-carboxylate synthase.